Consider the following 191-residue polypeptide: Ureidoglycolate lyase (191 aa).

It belongs to the ureidoglycolate lyase family. In terms of assembly, homodimer.

The enzyme catalyses (S)-ureidoglycolate = urea + glyoxylate. The protein operates within nitrogen metabolism; (S)-allantoin degradation. Functionally, catalyzes the catabolism of the allantoin degradation intermediate (S)-ureidoglycolate, generating urea and glyoxylate. Involved in the utilization of allantoin as secondary nitrogen source when primary sources are limiting. The sequence is that of Ureidoglycolate lyase from Schizosaccharomyces pombe (strain 972 / ATCC 24843) (Fission yeast).